Consider the following 287-residue polypeptide: SPX domain-containing protein 2 (287 aa).

The SPX domain occupies 1-162 (MKFGKSLSNQ…GALIRLPFIQ (162 aa)). Over residues 36–50 (EPRSVENRPNKRSRS) the composition is skewed to basic and acidic residues. 2 disordered regions span residues 36–61 (EPRSVENRPNKRSRSDSNSVDTDPTV) and 194–213 (KSRNLDEEGEPTTSGMVKTG).

It localises to the nucleus. Functionally, may inhibit PHR1 DNA-binding activity in a Pi-dependent manner. This Arabidopsis thaliana (Mouse-ear cress) protein is SPX domain-containing protein 2.